Here is a 523-residue protein sequence, read N- to C-terminus: UDP-glucuronosyltransferase 3A1 (523 aa).

The N-terminal stretch at M1–A22 is a signal peptide. Over A23–Q483 the chain is Extracellular. N-linked (GlcNAc...) asparagine glycosylation is present at N52. The helical transmembrane segment at Y484 to G504 threads the bilayer. The Cytoplasmic portion of the chain corresponds to K505–T523.

This sequence belongs to the UDP-glycosyltransferase family.

Its subcellular location is the membrane. The enzyme catalyses glucuronate acceptor + UDP-alpha-D-glucuronate = acceptor beta-D-glucuronoside + UDP + H(+). Functionally, UDP-glucuronosyltransferases catalyze phase II biotransformation reactions in which lipophilic substrates are conjugated with glucuronic acid to increase water solubility and enhance excretion. They are of major importance in the conjugation and subsequent elimination of potentially toxic xenobiotics and endogenous compounds. This is UDP-glucuronosyltransferase 3A1 (UGT3A1) from Homo sapiens (Human).